Reading from the N-terminus, the 1687-residue chain is Gag-Pol polyprotein (1687 aa).

Residue glycine 2 is the site of N-myristoyl glycine; by host attachment. Disordered regions lie at residues 106–197 and 420–490; these read SSPE…VILP and HKRE…LDKD. The PTAP/PSAP motif motif lies at 108–111; the sequence is PENT. Pro residues predominate over residues 139–157; it reads EPPPYPAALPPPLAPPAVG. Positions 140 to 143 match the PPXY motif motif; the sequence is PPPY. Residues 408-455 are a coiled coil; sequence LQDLVREAEKVYHKRETEEERQEREKKEAEERERRRDRRQEKNLTRIL. 2 stretches are compositionally biased toward basic and acidic residues: residues 420–451 and 479–490; these read HKRE…EKNL and TPRDGRPPLDKD. The segment at 490-507 adopts a CCHC-type zinc-finger fold; the sequence is DQCAYCKEKGHWARECPQ. The 71-residue stretch at 544 to 614 folds into the Peptidase A2 domain; that stretch reads IEFLVDTGAE…CPAPLLGRDL (71 aa). The Protease; shared with dimeric partner role is filled by aspartate 549. A Reverse transcriptase domain is found at 721–912; that stretch reads LDLGVLVPCQ…KEVTYLGYLL (192 aa). Positions 789, 863, 864, 1180, 1200, 1221, and 1291 each coordinate Mg(2+). Positions 1153–1299 constitute an RNase H type-1 domain; the sequence is LPGVPAWYTD…ADEAAKQAAL (147 aa). The HHCC-type zinc finger occupies 1339–1377; sequence HQLTHLGPEKLLQLVNRTSLLIPNLQSAVREVTSQCQAC. The Integrase catalytic domain occupies 1394-1552; sequence RGDRPGVYWE…TPYEILYGGP (159 aa). Mg(2+) contacts are provided by aspartate 1405 and aspartate 1464.

The protein belongs to the retroviral Pol polyprotein family. In terms of assembly, homohexamer; further associates as homomultimer. The virus core is composed of a lattice formed from hexagonal rings, each containing six capsid monomers. Interacts (via PPXY motif) with host NEDD4. Interacts (via PSAP motif) with host TSG101. As to quaternary structure, the reverse transcriptase is a monomer (Potential). Interacts (via RNase domains) with host release factor ETF1; this interaction is essential for translational readthrough of amber codon between viral gag and pol genes, as well as for viral replication. In terms of assembly, homodimer. Requires Mg(2+) as cofactor. Post-translationally, specific enzymatic cleavages by the viral protease yield mature proteins. The protease is released by autocatalytic cleavage. The polyprotein is cleaved during and after budding, this process is termed maturation. Phosphorylated on serine residues.

It is found in the virion. It localises to the host cell membrane. Its subcellular location is the host late endosome membrane. The protein localises to the host endosome. The protein resides in the host multivesicular body. It is found in the host cytoplasm. It catalyses the reaction DNA(n) + a 2'-deoxyribonucleoside 5'-triphosphate = DNA(n+1) + diphosphate. It carries out the reaction Endonucleolytic cleavage to 5'-phosphomonoester.. Most efficiently inhibited by Amprenavir, which is able to block Gag-Pol processing in infected cells. Functionally, plays a role in budding and is processed by the viral protease during virion maturation outside the cell. During budding, it recruits, in a PPXY-dependent or independent manner, Nedd4-like ubiquitin ligases that conjugate ubiquitin molecules to Gag-Pol, or to Gag-Pol binding host factors. Interaction with HECT ubiquitin ligases probably links the viral protein to the host ESCRT pathway and facilitates release. In terms of biological role, targets Gag and gag-pol polyproteins to the plasma membrane via a multipartite membrane binding signal, that includes its myristoylated N-terminus. Also mediates nuclear localization of the pre-integration complex. Its function is as follows. Constituent of the pre-integration complex (PIC) which tethers the latter to mitotic chromosomes. This allows the integration of the viral genome into the host DNA. Forms the spherical core of the virion that encapsulates the genomic RNA-nucleocapsid complex. Functionally, involved in the packaging and encapsidation of two copies of the genome. Binds with high affinity to conserved UCUG elements within the packaging signal, located near the 5'-end of the genome. This binding is dependent on genome dimerization. Acts as a nucleic acid chaperone which is involved in rearrangement of nucleic acid secondary structures during gRNA retrotranscription. In terms of biological role, the aspartyl protease mediates proteolytic cleavages of Gag and Gag-Pol polyproteins during or shortly after the release of the virion from the plasma membrane. Cleavages take place as an ordered, step-wise cascade to yield mature proteins. This process is called maturation. Displays maximal activity during the budding process just prior to particle release from the cell. Its function is as follows. RT is a multifunctional enzyme that converts the viral dimeric RNA genome into dsDNA in the cytoplasm, shortly after virus entry into the cell. This enzyme displays a DNA polymerase activity that can copy either DNA or RNA templates, and a ribonuclease H (RNase H) activity that cleaves the RNA strand of RNA-DNA heteroduplexes in a partially processive 3' to 5' endonucleasic mode. Conversion of viral genomic RNA into dsDNA requires many steps. A tRNA binds to the primer-binding site (PBS) situated at the 5' end of the viral RNA. RT uses the 3' end of the tRNA primer to perform a short round of RNA-dependent minus-strand DNA synthesis. The reading proceeds through the U5 region and ends after the repeated (R) region which is present at both ends of viral RNA. The portion of the RNA-DNA heteroduplex is digested by the RNase H, resulting in a ssDNA product attached to the tRNA primer. This ssDNA/tRNA hybridizes with the identical R region situated at the 3' end of viral RNA. This template exchange, known as minus-strand DNA strong stop transfer, can be either intra- or intermolecular. RT uses the 3' end of this newly synthesized short ssDNA to perform the RNA-dependent minus-strand DNA synthesis of the whole template. RNase H digests the RNA template except for a polypurine tract (PPT) situated at the 5' end of the genome. It is not clear if both polymerase and RNase H activities are simultaneous. RNase H probably can proceed both in a polymerase-dependent (RNA cut into small fragments by the same RT performing DNA synthesis) and a polymerase-independent mode (cleavage of remaining RNA fragments by free RTs). Secondly, RT performs DNA-directed plus-strand DNA synthesis using the PPT that has not been removed by RNase H as primers. PPT and tRNA primers are then removed by RNase H. The 3' and 5' ssDNA PBS regions hybridize to form a circular dsDNA intermediate. Strand displacement synthesis by RT to the PBS and PPT ends produces a blunt ended, linear dsDNA copy of the viral genome that includes long terminal repeats (LTRs) at both ends. Catalyzes viral DNA integration into the host chromosome, by performing a series of DNA cutting and joining reactions. This enzyme activity takes place after virion entry into a cell and reverse transcription of the RNA genome in dsDNA. The first step in the integration process is 3' processing. This step requires a complex comprising the viral genome, matrix protein and integrase. This complex is called the pre-integration complex (PIC). The integrase protein removes 2 nucleotides from each 3' end of the viral DNA, leaving recessed CA OH's at the 3' ends. In the second step that requires cell division, the PIC enters cell nucleus. In the third step, termed strand transfer, the integrase protein joins the previously processed 3' ends to the 5' ends of strands of target cellular DNA at the site of integration. The last step is viral DNA integration into host chromosome. The protein is Gag-Pol polyprotein (pol) of Woolly monkey sarcoma virus (WMSV).